The following is a 381-amino-acid chain: Lysophosphatidylserine lipase ABHD12 (381 aa).

At 1–58 the chain is on the cytoplasmic side; the sequence is MRKRNESVTVEHERAAAAPAPLDKGCSLRHSLRLPAADTGMKRPLGRRHGLWFRLRRL. A helical membrane pass occupies residues 59–79; the sequence is IIWLLGVYIAIPFLVKLCPAI. The Extracellular portion of the chain corresponds to 80 to 381; it reads QAKLVFLNFV…LGIPEHEHHH (302 aa). N-linked (GlcNAc...) asparagine glycosylation occurs at asparagine 106. Catalysis depends on serine 229, which acts as the Nucleophile. Active-site charge relay system residues include aspartate 316 and histidine 355.

It belongs to the serine esterase family.

It is found in the endoplasmic reticulum membrane. It catalyses the reaction 1-(9Z-octadecenoyl)-sn-glycero-3-phospho-L-serine + H2O = sn-glycero-3-phospho-L-serine + (9Z)-octadecenoate + H(+). It carries out the reaction 1-(9Z-octadecenoyl)-sn-glycero-3-phospho-(1'-sn-glycerol) + H2O = sn-glycero-3-phospho-(1'-sn-glycerol) + (9Z)-octadecenoate + H(+). The enzyme catalyses 1-(9Z-octadecenoyl)-sn-glycero-3-phospho-(1D-myo-inositol) + H2O = sn-glycero-3-phospho-1D-myo-inositol + (9Z)-octadecenoate + H(+). The catalysed reaction is 1-(9Z-octadecenoyl)-sn-glycero-3-phosphoethanolamine + H2O = sn-glycero-3-phosphoethanolamine + (9Z)-octadecenoate + H(+). It catalyses the reaction 1-(9Z-octadecenoyl)-sn-glycero-3-phosphocholine + H2O = 1-(9Z-octadecenoyl)-sn-glycerol + phosphocholine + H(+). It carries out the reaction 2-(9Z-octadecenoyl)-glycerol + H2O = glycerol + (9Z)-octadecenoate + H(+). The enzyme catalyses 1-hexadecanoyl-sn-glycero-3-phospho-L-serine + H2O = sn-glycero-3-phospho-L-serine + hexadecanoate + H(+). The catalysed reaction is 2-(5Z,8Z,11Z,14Z-eicosatetraenoyl)-glycerol + H2O = glycerol + (5Z,8Z,11Z,14Z)-eicosatetraenoate + H(+). It catalyses the reaction Hydrolyzes glycerol monoesters of long-chain fatty acids.. It carries out the reaction 1-decanoylglycerol + H2O = decanoate + glycerol + H(+). The enzyme catalyses 1-dodecanoylglycerol + H2O = dodecanoate + glycerol + H(+). The catalysed reaction is 1-tetradecanoylglycerol + H2O = tetradecanoate + glycerol + H(+). It catalyses the reaction 2-hexadecanoylglycerol + H2O = glycerol + hexadecanoate + H(+). It carries out the reaction 1-(9Z-octadecenoyl)-glycerol + H2O = glycerol + (9Z)-octadecenoate + H(+). The enzyme catalyses 2-(9Z,12Z-octadecadienoyl)-glycerol + H2O = (9Z,12Z)-octadecadienoate + glycerol + H(+). The catalysed reaction is 1-(5Z,8Z,11Z,14Z-eicosatetraenoyl)-glycerol + H2O = glycerol + (5Z,8Z,11Z,14Z)-eicosatetraenoate + H(+). It catalyses the reaction 1-(9Z,12Z-octadecadienoyl)-glycerol + H2O = (9Z,12Z)-octadecadienoate + glycerol + H(+). It carries out the reaction 1-hexadecanoylglycerol + H2O = glycerol + hexadecanoate + H(+). The enzyme catalyses 1-octadecanoylglycerol + H2O = octadecanoate + glycerol + H(+). The catalysed reaction is 1-octadecanoyl-2-(9,10-epoxyoctadecanoyl)-sn-glycero-3-phospho-L-serine + H2O = 9,10-epoxyoctadecanoate + 1-octadecanoyl-sn-glycero-3-phosphoserine + H(+). It catalyses the reaction 1-octadecanoyl-2-(10-hydroxyoctadecanoyl)-sn-glycero-3-phospho-L-serine + H2O = 1-octadecanoyl-sn-glycero-3-phosphoserine + 10-hydroxyoctadecanoate + H(+). It carries out the reaction 1-hexadecanoyl-2-(10-hydroxyoctadecanoyl)-sn-glycero-3-phospho-L-serine + H2O = 10-hydroxyoctadecanoate + 1-hexadecanoyl-sn-glycero-3-phospho-L-serine + H(+). In terms of biological role, lysophosphatidylserine (LPS) lipase that mediates the hydrolysis of lysophosphatidylserine, a class of signaling lipids that regulates immunological and neurological processes. Represents a major lysophosphatidylserine lipase in the brain, thereby playing a key role in the central nervous system. Also able to hydrolyze oxidized phosphatidylserine; oxidized phosphatidylserine is produced in response to severe inflammatory stress and constitutes a proapoptotic 'eat me' signal. Also has monoacylglycerol (MAG) lipase activity: hydrolyzes 2-arachidonoylglycerol (2-AG), thereby acting as a regulator of endocannabinoid signaling pathways. Has a strong preference for very-long-chain lipid substrates; substrate specificity is likely due to improved catalysis and not improved substrate binding. The protein is Lysophosphatidylserine lipase ABHD12 of Gallus gallus (Chicken).